A 208-amino-acid polypeptide reads, in one-letter code: Uracil phosphoribosyltransferase (208 aa).

Residues Arg-78, Arg-103, and 130 to 138 (DPMLATGGS) contribute to the 5-phospho-alpha-D-ribose 1-diphosphate site. Uracil contacts are provided by residues Ile-193 and 198–200 (GDA). Residue Asp-199 participates in 5-phospho-alpha-D-ribose 1-diphosphate binding.

The protein belongs to the UPRTase family. Requires Mg(2+) as cofactor.

The catalysed reaction is UMP + diphosphate = 5-phospho-alpha-D-ribose 1-diphosphate + uracil. The protein operates within pyrimidine metabolism; UMP biosynthesis via salvage pathway; UMP from uracil: step 1/1. Its activity is regulated as follows. Allosterically activated by GTP. Functionally, catalyzes the conversion of uracil and 5-phospho-alpha-D-ribose 1-diphosphate (PRPP) to UMP and diphosphate. The protein is Uracil phosphoribosyltransferase of Enterobacter sp. (strain 638).